The primary structure comprises 840 residues: Subtilisin-like protease SBT2.3 (840 aa).

A signal peptide spans 1 to 27 (MVRVMLVRFGFLLLMISFVFLSNNTLG). The propeptide at 28 to 146 (QQQDDDDDSA…IVLDYSVRTA (119 aa)) is activation peptide. Positions 38 to 146 (VYIVTLKQPP…IVLDYSVRTA (109 aa)) constitute an Inhibitor I9 domain. Residues 61–81 (KSKFTPKLRPRNNSRKRHGKS) are compositionally biased toward basic residues. The disordered stretch occupies residues 61 to 85 (KSKFTPKLRPRNNSRKRHGKSKIPS). N72 is a glycosylation site (N-linked (GlcNAc...) asparagine). In terms of domain architecture, Peptidase S8 spans 148 to 694 (TYTPQFMGLP…SGFVNATAAL (547 aa)). The active-site Charge relay system is D180. Residues N193 and N241 are each glycosylated (N-linked (GlcNAc...) asparagine). H255 functions as the Charge relay system in the catalytic mechanism. N398, N427, N480, N525, and N553 each carry an N-linked (GlcNAc...) asparagine glycan. Residues 418–513 (MISAFHALNN…MDMPGIIIPS (96 aa)) enclose the PA domain. The active-site Charge relay system is S619. N689, N715, N723, N767, and N808 each carry an N-linked (GlcNAc...) asparagine glycan.

It belongs to the peptidase S8 family.

Its subcellular location is the secreted. The protein is Subtilisin-like protease SBT2.3 of Arabidopsis thaliana (Mouse-ear cress).